We begin with the raw amino-acid sequence, 492 residues long: MSHANPVQFINGQWQAGLGHDVSSSNPARNEVIWQGKTASKDQVNDAVLSARQAFESWANISLEARVAVVTKFAELLAENKDALATTIALETGKPKWETTGEAGAMVAKVAISLKAYNERTGTVENPMPGAKAFIRHKPHGVVAIFGPYNFPGHLPNGHIVPALIAGNTIVFKPSELTPRVAQEMLKLWEQAGLPNGVINLVQGEVETGKALASHKLIDGLFFTGSSNTGHILHEQFAGQPGKILALEMGGNNPLVVKDVSDIDAVVHDIVQSAFVTTGQRCTCARRLFIEANEQGDAILARLIEVTKNLTIGYYDDEAQPFMGSMISEKAALSLVDAQAKLLALGAKSVLDLKHLEVGTGFVSPGIIDVSDIIADIPDEEYFGPLVKLYRYNDFDKAIDEANNTGFGLSAGLLSDSEASYNHFFTRIRAGIVNWNKPITGASSAAPFGGIGASGNHRASAFYAADYCAYPIASVEAEKVSLPETLTPGMKF.

225–230 serves as a coordination point for NAD(+); it reads GSSNTG. Catalysis depends on residues Glu-248 and Cys-282.

It belongs to the aldehyde dehydrogenase family. AstD subfamily.

It catalyses the reaction N-succinyl-L-glutamate 5-semialdehyde + NAD(+) + H2O = N-succinyl-L-glutamate + NADH + 2 H(+). The protein operates within amino-acid degradation; L-arginine degradation via AST pathway; L-glutamate and succinate from L-arginine: step 4/5. Catalyzes the NAD-dependent reduction of succinylglutamate semialdehyde into succinylglutamate. The sequence is that of N-succinylglutamate 5-semialdehyde dehydrogenase from Colwellia psychrerythraea (strain 34H / ATCC BAA-681) (Vibrio psychroerythus).